Reading from the N-terminus, the 642-residue chain is LIM domain kinase 2 (642 aa).

2 consecutive LIM zinc-binding domains span residues 12–63 (CLGC…CHKD) and 72–124 (CHGC…CGKC). Residues 152–239 (LISMPAATDG…TLQLLIEHDP (88 aa)) enclose the PDZ domain. A disordered region spans residues 282–304 (RSLRRSNSISKSPGPSSPKEPLL). Positions 286–304 (RSNSISKSPGPSSPKEPLL) are enriched in low complexity. The Protein kinase domain maps to 331–608 (LIHGEVLGKG…DSFEALSLYL (278 aa)). Residues 337 to 345 (LGKGFFGQA) and K360 each bind ATP. D451 is a catalytic residue. T505 carries the post-translational modification Phosphothreonine.

Belongs to the protein kinase superfamily. TKL Ser/Thr protein kinase family. As to quaternary structure, binds ROCK1 and LKAP. Expressed predominantly in the lung, and faintly in the kidney, liver, brain, spleen, gizzard, and intestine.

The protein resides in the cytoplasm. The protein localises to the cytoskeleton. It localises to the spindle. Its subcellular location is the microtubule organizing center. It is found in the centrosome. It carries out the reaction L-seryl-[protein] + ATP = O-phospho-L-seryl-[protein] + ADP + H(+). The catalysed reaction is L-threonyl-[protein] + ATP = O-phospho-L-threonyl-[protein] + ADP + H(+). Serine/threonine-protein kinase that plays an essential role in the regulation of actin filament dynamics. Acts downstream of several Rho family GTPase signal transduction pathways. Involved in astral microtubule organization and mitotic spindle orientation during early stages of mitosis by mediating phosphorylation of TPPP. This Gallus gallus (Chicken) protein is LIM domain kinase 2 (LIMK2).